We begin with the raw amino-acid sequence, 1493 residues long: MENRPGSFQYVPVQLQGGAPWGFTLKGGLEHCEPLTVSKIEDGGKAALSQKMRTGDELVNINGTPLYGSRQEALILIKGSFRILKLIVRRRNAPVSRPHSWHVAKLLEGCPEAATTMHFPSEAFSLSWHSGCNTSDVCVQWCPLSRHCSTEKSSSIGSMESLEQPGQATYESHLLPIDQNMYPNQRDSAYSSFSASSNASDCALSLRPEEPASTDCIMQGPGPTKAPSGRPNVAETSGGSRRTNGGHLTPSSQMSSRPQEGYQSGPAKAVRGPPQPPVRRDSLQASRAQLLNGEQRRASEPVVPLPQKEKLSLEPVLPARNPNRFCCLSGHDQVTSEGHQNCEFSQPPESSQQGSEHLLMQASTKAVGSPKACDRASSVDSNPLNEASAELAKASFGRPPHLIGPTGHRHSAPEQLLASHLQHVHLDTRGSKGMELPPVQDGHQWTLSPLHSSHKGKKSPCPPTGGTHDQSSKERKTRQVDDRSLVLGHQSQSSPPHGEADGHPSEKGFLDPNRTSRAASELANQQPSASGSLVQQATDCSSTTKAASGTEAGEEGDSEPKECSRMGGRRSGGTRGRSIQNRRKSERFATNLRNEIQRRKAQLQKSKGPLSQLCDTKEPVEETQEPPESPPLTASNTSLLSSCKKPPSPRDKLFNKSMMLRARSSECLSQAPESHESRTGLEGRISPGQRPGQSSLGLNTWWKAPDPSSSDPEKAHAHCGVRGGHWRWSPEHNSQPLVAAAMEGPSNPGDNKELKASTAQAGEDAILLPFADRRKFFEESSKSLSTSHLPGLTTHSNKTFTQRPKPIDQNFQPMSSSCRELRRHPMDQSYHSADQPYHATDQSYHSMSPLQSETPTYSECFASKGLENSMCCKPLHCGDFDYHRTCSYSCSVQGALVHDPCIYCSGEICPALLKRNMMPNCYNCRCHHHQCIRCSVCYHNPQHSALEDSSLAPGNTWKPRKLTVQEFPGDKWNPITGNRKTSQSGREMAHSKTSFSWATPFHPCLENPALDLSSYRAISSLDLLGDFKHALKKSEETSVYEEGSSLASMPHPLRSRAFSESHISLAPQSTRAWGQHRRELFSKGDETQSDLLGARKKAFPPPRPPPPNWEKYRLFRAAQQQKQQQQQQKQQEEEEEEEEEEEEEEEEEEEEAEEEEEELPPQYFSSETSGSCALNPEEVLEQPQPLSFGHLEGSRQGSQSVPAEQESFALHSSDFLPPIRGHLGSQPEQAQPPCYYGIGGLWRTSGQEATESAKQEFQHFSPPSGAPGIPTSYSAYYNISVAKAELLNKLKDQPEMAEIGLGEEEVDHELAQKKIQLIESISRKLSVLREAQRGLLEDINANSALGEEVEANLKAVCKSNEFEKYHLFVGDLDKVVNLLLSLSGRLARVENALNSIDSEANQEKLVLIEKKQQLTGQLADAKELKEHVDRREKLVFGMVSRYLPQDQLQDYQHFVKMKSALIIEQRELEEKIKLGEEQLKCLRESLLLGPSNF.

The PDZ domain occupies 10-92; that stretch reads YVPVQLQGGA…ILKLIVRRRN (83 aa). Residues 202–282 are disordered; that stretch reads CALSLRPEEP…PPQPPVRRDS (81 aa). Polar residues-rich tracts occupy residues 234-243 and 249-262; these read AETSGGSRRT and TPSS…QEGY. Residue Ser411 is modified to Phosphoserine. The interval 430–695 is disordered; sequence GSKGMELPPV…SPGQRPGQSS (266 aa). Composition is skewed to basic and acidic residues over residues 470-484 and 498-509; these read QSSK…DDRS and GEADGHPSEKGF. Positions 513–547 are enriched in polar residues; sequence NRTSRAASELANQQPSASGSLVQQATDCSSTTKAA. A Phosphoserine modification is found at Ser729. Disordered regions lie at residues 740–759 and 781–813; these read AAME…ASTA and SKSL…NFQP. Polar residues predominate over residues 782–802; sequence KSLSTSHLPGLTTHSNKTFTQ. Ser1019 bears the Phosphoserine mark. Disordered regions lie at residues 1117–1170, 1187–1206, 1214–1236, and 1246–1265; these read AAQQ…ETSG, SFGH…AEQE, DFLP…PCYY, and GQEA…PPSG. Over residues 1118-1129 the composition is skewed to low complexity; the sequence is AQQQKQQQQQQK. Positions 1132–1159 are enriched in acidic residues; that stretch reads EEEEEEEEEEEEEEEEEEEEAEEEEEEL. One can recognise an ASD2 domain in the interval 1213 to 1492; that stretch reads SDFLPPIRGH…RESLLLGPSN (280 aa). The stretch at 1382–1488 forms a coiled coil; it reads LSGRLARVEN…LKCLRESLLL (107 aa).

This sequence belongs to the shroom family. As to quaternary structure, interacts directly with F-actin. As to expression, expressed in all fetal and adult tissues investigated. Expressed in adult heart, brain, placenta, lung, liver, skeletal muscle, kidney and pancreas. In brain regions detected in cerebellum, cerebral cortex, medulla, spinal cord, occipital pole, frontal lobe, temporal lobe and putamen. The expression is strongest in the medulla and weakest in the cerebral cortex.

The protein localises to the cytoplasm. It localises to the cytoskeleton. In terms of biological role, probable regulator of cytoskeletal architecture that plays an important role in development. May regulate cellular and cytoskeletal architecture by modulating the spatial distribution of myosin II. The protein is Protein Shroom4 (SHROOM4) of Homo sapiens (Human).